Reading from the N-terminus, the 170-residue chain is MFEVSAIVFAVSQAAEEGKSSNFLLPNGTFFFVLAIFLVVLGVIGTFVVPPILKVLQERDAMVAKTDADSKMSAAQFAAAQADYEAAMKEARVQSSFLRDNARVDGRKSIEEARVRAEQHVVSTLQIAGEQIKRERDAVELDLRAKAGAMSLILASRILGVDITASVVTR.

Residues 30–50 (FFFVLAIFLVVLGVIGTFVVP) form a helical membrane-spanning segment.

It belongs to the ATPase B chain family. In terms of assembly, F-type ATPases have 2 components, F(1) - the catalytic core - and F(0) - the membrane proton channel. F(1) has five subunits: alpha(3), beta(3), gamma(1), delta(1), epsilon(1). F(0) has three main subunits: a(1), b(2) and c(10-14). The alpha and beta chains form an alternating ring which encloses part of the gamma chain. F(1) is attached to F(0) by a central stalk formed by the gamma and epsilon chains, while a peripheral stalk is formed by the delta and b chains.

It localises to the cell membrane. In terms of biological role, f(1)F(0) ATP synthase produces ATP from ADP in the presence of a proton or sodium gradient. F-type ATPases consist of two structural domains, F(1) containing the extramembraneous catalytic core and F(0) containing the membrane proton channel, linked together by a central stalk and a peripheral stalk. During catalysis, ATP synthesis in the catalytic domain of F(1) is coupled via a rotary mechanism of the central stalk subunits to proton translocation. Component of the F(0) channel, it forms part of the peripheral stalk, linking F(1) to F(0). This chain is ATP synthase subunit b, found in Mycobacterium leprae (strain TN).